Reading from the N-terminus, the 458-residue chain is tRNA modification GTPase MnmE (458 aa).

(6S)-5-formyl-5,6,7,8-tetrahydrofolate contacts are provided by arginine 22, glutamate 84, and arginine 123. A TrmE-type G domain is found at 220 to 379 (GIATAIIGRP…LEKAIADLFF (160 aa)). Asparagine 230 is a binding site for K(+). Residues 230 to 235 (NVGKSS), 249 to 255 (TDIAGTT), and 274 to 277 (DTAG) each bind GTP. Serine 234 provides a ligand contact to Mg(2+). K(+) contacts are provided by threonine 249, isoleucine 251, and threonine 254. Residue threonine 255 coordinates Mg(2+). Lysine 458 serves as a coordination point for (6S)-5-formyl-5,6,7,8-tetrahydrofolate.

This sequence belongs to the TRAFAC class TrmE-Era-EngA-EngB-Septin-like GTPase superfamily. TrmE GTPase family. In terms of assembly, homodimer. Heterotetramer of two MnmE and two MnmG subunits. The cofactor is K(+).

It is found in the cytoplasm. Exhibits a very high intrinsic GTPase hydrolysis rate. Involved in the addition of a carboxymethylaminomethyl (cmnm) group at the wobble position (U34) of certain tRNAs, forming tRNA-cmnm(5)s(2)U34. The sequence is that of tRNA modification GTPase MnmE from Bacillus anthracis.